The following is a 608-amino-acid chain: Leucine aminopeptidase 2 (608 aa).

Residues 134-136 and 269-274 each bind substrate; these read QCQ and PYGGME. H298 contributes to the Zn(2+) binding site. The Proton acceptor role is filled by E299. 2 residues coordinate Zn(2+): H302 and E321. Residue Y386 is the Proton donor of the active site.

It belongs to the peptidase M1 family. The cofactor is Zn(2+).

The protein localises to the cytoplasm. The protein resides in the nucleus. The catalysed reaction is an epoxide + H2O = an ethanediol. Aminopeptidase that preferentially cleaves di- and tripeptides. Also has low epoxide hydrolase activity (in vitro). Can hydrolyze the epoxide leukotriene LTA(4) but it forms preferentially 5,6-dihydroxy-7,9,11,14-eicosatetraenoic acid rather than the cytokine leukotriene B(4) as the product compared to the homologous mammalian enzyme (in vitro). This is Leucine aminopeptidase 2 from Sclerotinia sclerotiorum (strain ATCC 18683 / 1980 / Ss-1) (White mold).